We begin with the raw amino-acid sequence, 704 residues long: Polyribonucleotide nucleotidyltransferase (704 aa).

Positions 491 and 497 each coordinate Mg(2+). The KH domain maps to 558 to 617 (PNYAVIEINSDKIRDVIGKGGATIRQLTEDTGAVIDIDDNGTIRIFGENKAATKEAIRQI). The S1 motif domain occupies 627–695 (GKVYKGTVAR…NRGRIKLTMK (69 aa)).

This sequence belongs to the polyribonucleotide nucleotidyltransferase family. In terms of assembly, component of the RNA degradosome, which is a multiprotein complex involved in RNA processing and mRNA degradation. Mg(2+) is required as a cofactor.

The protein localises to the cytoplasm. The catalysed reaction is RNA(n+1) + phosphate = RNA(n) + a ribonucleoside 5'-diphosphate. Involved in mRNA degradation. Catalyzes the phosphorolysis of single-stranded polyribonucleotides processively in the 3'- to 5'-direction. This Psychrobacter sp. (strain PRwf-1) protein is Polyribonucleotide nucleotidyltransferase.